A 406-amino-acid chain; its full sequence is Autotransporter heptosyltransferase TibC (406 aa).

ADP-D-glycero-beta-D-manno-heptose contacts are provided by Thr107, Leu108, and Gly109. Residue Asp110 is the Proton acceptor of the active site. Residues Gln224, Thr226, Lys230, Arg257, Leu281, Gly302, and Glu326 each contribute to the ADP-D-glycero-beta-D-manno-heptose site. Residues Cys339, Cys342, Cys358, and Cys370 each coordinate Fe(3+).

Belongs to the glycosyltransferase 9 family. As to quaternary structure, homododecamer composed of 6 homodimers forming a ring. Fe(3+) is required as a cofactor.

It carries out the reaction ADP-D-glycero-beta-D-manno-heptose + L-seryl-[protein] = O-(D-glycero-alpha-D-manno-heptosyl)-L-seryl-[protein] + ADP + H(+). Its function is as follows. Glycosylates adhesin TibA. Specifically adds anomer D-glycero-beta-D-manno-heptose. Cannot use ADP-L-glycero-beta-D-manno-heptose as a sugar donor. This chain is Autotransporter heptosyltransferase TibC, found in Escherichia coli O78:H11 (strain H10407 / ETEC).